A 640-amino-acid chain; its full sequence is 1-deoxy-D-xylulose-5-phosphate synthase (640 aa).

Residues histidine 77 and 118–120 each bind thiamine diphosphate; that span reads AHA. Aspartate 149 provides a ligand contact to Mg(2+). Residues 150 to 151, asparagine 178, tyrosine 287, and glutamate 369 each bind thiamine diphosphate; that span reads GS. Position 178 (asparagine 178) interacts with Mg(2+).

This sequence belongs to the transketolase family. DXPS subfamily. As to quaternary structure, homodimer. Mg(2+) is required as a cofactor. It depends on thiamine diphosphate as a cofactor.

The catalysed reaction is D-glyceraldehyde 3-phosphate + pyruvate + H(+) = 1-deoxy-D-xylulose 5-phosphate + CO2. The protein operates within metabolic intermediate biosynthesis; 1-deoxy-D-xylulose 5-phosphate biosynthesis; 1-deoxy-D-xylulose 5-phosphate from D-glyceraldehyde 3-phosphate and pyruvate: step 1/1. In terms of biological role, catalyzes the acyloin condensation reaction between C atoms 2 and 3 of pyruvate and glyceraldehyde 3-phosphate to yield 1-deoxy-D-xylulose-5-phosphate (DXP). The chain is 1-deoxy-D-xylulose-5-phosphate synthase from Caulobacter vibrioides (strain NA1000 / CB15N) (Caulobacter crescentus).